Reading from the N-terminus, the 384-residue chain is Bifunctional enzyme IspD/IspF (384 aa).

2 2-C-methyl-D-erythritol 4-phosphate cytidylyltransferase regions span residues 1-227 (MAKV…EGEQ) and 1-228 (MAKV…GEQR). Residues 228 to 384 (RIGSGFDVHR…QATALITLPF (157 aa)) form a 2-C-methyl-D-erythritol 2,4-cyclodiphosphate synthase region. A divalent metal cation-binding residues include Asp-234 and His-236. 4-CDP-2-C-methyl-D-erythritol 2-phosphate-binding positions include 234–236 (DVH) and 260–261 (HS). His-268 contributes to the a divalent metal cation binding site. 4-CDP-2-C-methyl-D-erythritol 2-phosphate is bound by residues 282–284 (DIG), 358–361 (TTTE), Phe-365, and Arg-368.

It in the N-terminal section; belongs to the IspD/TarI cytidylyltransferase family. IspD subfamily. The protein in the C-terminal section; belongs to the IspF family. It depends on a divalent metal cation as a cofactor.

It carries out the reaction 2-C-methyl-D-erythritol 4-phosphate + CTP + H(+) = 4-CDP-2-C-methyl-D-erythritol + diphosphate. The enzyme catalyses 4-CDP-2-C-methyl-D-erythritol 2-phosphate = 2-C-methyl-D-erythritol 2,4-cyclic diphosphate + CMP. The protein operates within isoprenoid biosynthesis; isopentenyl diphosphate biosynthesis via DXP pathway; isopentenyl diphosphate from 1-deoxy-D-xylulose 5-phosphate: step 2/6. It participates in isoprenoid biosynthesis; isopentenyl diphosphate biosynthesis via DXP pathway; isopentenyl diphosphate from 1-deoxy-D-xylulose 5-phosphate: step 4/6. Functionally, bifunctional enzyme that catalyzes the formation of 4-diphosphocytidyl-2-C-methyl-D-erythritol from CTP and 2-C-methyl-D-erythritol 4-phosphate (MEP) (IspD), and catalyzes the conversion of 4-diphosphocytidyl-2-C-methyl-D-erythritol 2-phosphate (CDP-ME2P) to 2-C-methyl-D-erythritol 2,4-cyclodiphosphate (ME-CPP) with a corresponding release of cytidine 5-monophosphate (CMP) (IspF). This chain is Bifunctional enzyme IspD/IspF, found in Rhodospirillum rubrum (strain ATCC 11170 / ATH 1.1.1 / DSM 467 / LMG 4362 / NCIMB 8255 / S1).